The chain runs to 284 residues: Large ribosomal subunit protein uL2 (284 aa).

Disordered regions lie at residues 28 to 50 and 232 to 284; these read ELEG…FKKS and RGTA…DRRK. The span at 36 to 46 shows a compositional bias: basic residues; it reads RSVRPNKKLSF. Basic and acidic residues predominate over residues 240–250; the sequence is DHPHGGGEGRH. The segment covering 264–284 has biased composition (basic residues); the sequence is KGLKTRDKRKSNKWIVKDRRK.

The protein belongs to the universal ribosomal protein uL2 family. As to quaternary structure, part of the 50S ribosomal subunit. Forms a bridge to the 30S subunit in the 70S ribosome.

One of the primary rRNA binding proteins. Required for association of the 30S and 50S subunits to form the 70S ribosome, for tRNA binding and peptide bond formation. It has been suggested to have peptidyltransferase activity; this is somewhat controversial. Makes several contacts with the 16S rRNA in the 70S ribosome. The chain is Large ribosomal subunit protein uL2 from Chlamydia muridarum (strain MoPn / Nigg).